We begin with the raw amino-acid sequence, 163 residues long: Crossover junction endodeoxyribonuclease RuvC (163 aa).

Active-site residues include Asp-7, Glu-67, and Asp-140. Residues Asp-7, Glu-67, and Asp-140 each coordinate Mg(2+).

This sequence belongs to the RuvC family. As to quaternary structure, homodimer which binds Holliday junction (HJ) DNA. The HJ becomes 2-fold symmetrical on binding to RuvC with unstacked arms; it has a different conformation from HJ DNA in complex with RuvA. In the full resolvosome a probable DNA-RuvA(4)-RuvB(12)-RuvC(2) complex forms which resolves the HJ. Mg(2+) serves as cofactor.

It localises to the cytoplasm. It carries out the reaction Endonucleolytic cleavage at a junction such as a reciprocal single-stranded crossover between two homologous DNA duplexes (Holliday junction).. In terms of biological role, the RuvA-RuvB-RuvC complex processes Holliday junction (HJ) DNA during genetic recombination and DNA repair. Endonuclease that resolves HJ intermediates. Cleaves cruciform DNA by making single-stranded nicks across the HJ at symmetrical positions within the homologous arms, yielding a 5'-phosphate and a 3'-hydroxyl group; requires a central core of homology in the junction. The consensus cleavage sequence is 5'-(A/T)TT(C/G)-3'. Cleavage occurs on the 3'-side of the TT dinucleotide at the point of strand exchange. HJ branch migration catalyzed by RuvA-RuvB allows RuvC to scan DNA until it finds its consensus sequence, where it cleaves and resolves the cruciform DNA. The chain is Crossover junction endodeoxyribonuclease RuvC from Petrotoga mobilis (strain DSM 10674 / SJ95).